The chain runs to 388 residues: Probable ubiquitin-conjugating enzyme E2 L709 (388 aa).

Residues 3–162 enclose the UBC core domain; that stretch reads NVHKRVIKDI…GNDLMVQKLF (160 aa). Cys-95 serves as the catalytic Glycyl thioester intermediate. Residues 195–388 are disordered; that stretch reads VEEKSAKTSK…SSKSSKTGKK (194 aa). Composition is skewed to acidic residues over residues 221–238 and 246–297; these read SEEE…DSES and DVVD…ESEE. Over residues 310 to 388 the composition is skewed to low complexity; sequence KTTTKSSSTK…SSKSSKTGKK (79 aa).

This sequence belongs to the ubiquitin-conjugating enzyme family.

The catalysed reaction is S-ubiquitinyl-[E1 ubiquitin-activating enzyme]-L-cysteine + [E2 ubiquitin-conjugating enzyme]-L-cysteine = [E1 ubiquitin-activating enzyme]-L-cysteine + S-ubiquitinyl-[E2 ubiquitin-conjugating enzyme]-L-cysteine.. The protein operates within protein modification; protein ubiquitination. Its function is as follows. Catalyzes the covalent attachment of ubiquitin to other proteins. This is Probable ubiquitin-conjugating enzyme E2 L709 from Acanthamoeba polyphaga (Amoeba).